The sequence spans 316 residues: HTH-type transcriptional regulator cbl (316 aa).

The region spanning 1 to 59 (MNFQQLKIIREAARQDYNLTEVANMLFTSQSGVSRHIRELEDELGIEIFVRRGKRLLGM) is the HTH lysR-type domain. Residues 19-38 (LTEVANMLFTSQSGVSRHIR) constitute a DNA-binding region (H-T-H motif).

This sequence belongs to the LysR transcriptional regulatory family.

Functionally, may be an accessory regulatory protein within the cys regulon. This Escherichia coli (strain K12) protein is HTH-type transcriptional regulator cbl (cbl).